The primary structure comprises 153 residues: Transcriptional repressor NrdR (153 aa).

A zinc finger lies at 3–34 (CPSCFHNGTRVLDSRPVDEGRSIRRRRECESC). Residues 49-139 (LIVVKKEGTR…VYRQFKDLNV (91 aa)) form the ATP-cone domain.

This sequence belongs to the NrdR family. Zn(2+) is required as a cofactor.

Its function is as follows. Negatively regulates transcription of bacterial ribonucleotide reductase nrd genes and operons by binding to NrdR-boxes. In Bacillus mycoides (strain KBAB4) (Bacillus weihenstephanensis), this protein is Transcriptional repressor NrdR.